Consider the following 228-residue polypeptide: Protein GrpE (228 aa).

The segment covering 1–22 (MDDKQKTNEEVKASSFDSEKSS) has biased composition (basic and acidic residues). Residues 1-71 (MDDKQKTNEE…DQTNTNNNEL (71 aa)) are disordered. Over residues 38 to 53 (QNVQHDNGSNPAQKQN) the composition is skewed to polar residues.

Belongs to the GrpE family. In terms of assembly, homodimer.

The protein resides in the cytoplasm. Its function is as follows. Participates actively in the response to hyperosmotic and heat shock by preventing the aggregation of stress-denatured proteins, in association with DnaK and GrpE. It is the nucleotide exchange factor for DnaK and may function as a thermosensor. Unfolded proteins bind initially to DnaJ; upon interaction with the DnaJ-bound protein, DnaK hydrolyzes its bound ATP, resulting in the formation of a stable complex. GrpE releases ADP from DnaK; ATP binding to DnaK triggers the release of the substrate protein, thus completing the reaction cycle. Several rounds of ATP-dependent interactions between DnaJ, DnaK and GrpE are required for fully efficient folding. The protein is Protein GrpE of Coprothermobacter proteolyticus (strain ATCC 35245 / DSM 5265 / OCM 4 / BT).